Reading from the N-terminus, the 450-residue chain is MTHIKFDYSKALRFFEERELDYLEPAVKAAHDSLHNGTGAGNDALGWINLPTDYDKEEFARIKKATEKIHSDSDVLIVIGIGGSYLGARAAIETLNHSFYNVLEKGARKTPQVFFAGNSISSSYLHDLIEVVGDRDFSVNVISKSGTTTEPAIAFRVFKELLIKKYGEEGAKKRIYATTDKAKGALKTLSDNEGYETFVVPDDVGGRFSVLTAVGLLPIAVSGVDIDALMNGAAAASKDFDKPELKNNIAYQYAAARNVLYRKGKVTELLISYEPGLQYFNEWWKQLFGESEGKDKKGIYPSSANFSTDLHSIGQYIQDGRRNLFETVIKVDKPRHNLTINKEDVDLDGLNYLAGETVDFVNTKAFEGTLLAHTDGEVPNFVVEVPELDAYTFGYLVYFFEKAVAISGYLNGVNPFDQPGVEAYKANMFALLGKPGFEDKKAELEKRLND.

E290 functions as the Proton donor in the catalytic mechanism. Residues H311 and K425 contribute to the active site.

It belongs to the GPI family.

It is found in the cytoplasm. It catalyses the reaction alpha-D-glucose 6-phosphate = beta-D-fructose 6-phosphate. The protein operates within carbohydrate biosynthesis; gluconeogenesis. Its pathway is carbohydrate degradation; glycolysis; D-glyceraldehyde 3-phosphate and glycerone phosphate from D-glucose: step 2/4. Functionally, catalyzes the reversible isomerization of glucose-6-phosphate to fructose-6-phosphate. This Listeria monocytogenes serovar 1/2a (strain ATCC BAA-679 / EGD-e) protein is Glucose-6-phosphate isomerase.